A 617-amino-acid polypeptide reads, in one-letter code: V-type proton ATPase catalytic subunit A (617 aa).

Residue 257–264 coordinates ATP; that stretch reads GAFGCGKT.

This sequence belongs to the ATPase alpha/beta chains family. V-ATPase is a heteromultimeric enzyme composed of a peripheral catalytic V1 complex (components A to H) attached to an integral membrane V0 proton pore complex (components: a, c, c', c'', d, e, f and VOA1). In terms of processing, is a probable target for sumoylation.

The protein resides in the vacuole membrane. It carries out the reaction ATP + H2O + 4 H(+)(in) = ADP + phosphate + 5 H(+)(out). In terms of biological role, catalytic subunit of the V1 complex of vacuolar(H+)-ATPase (V-ATPase), a multisubunit enzyme composed of a peripheral complex (V1) that hydrolyzes ATP and a membrane integral complex (V0) that translocates protons. V-ATPase is responsible for acidifying and maintaining the pH of intracellular compartments. Mediates oxidative stress response, filamentous growth, and plays an important role in virulence. The polypeptide is V-type proton ATPase catalytic subunit A (Candida albicans (strain SC5314 / ATCC MYA-2876) (Yeast)).